Here is a 264-residue protein sequence, read N- to C-terminus: Thiazole synthase (264 aa).

Lys-101 (schiff-base intermediate with DXP) is an active-site residue. 1-deoxy-D-xylulose 5-phosphate contacts are provided by residues Gly-162, 189 to 190 (AG), and 211 to 212 (NT). The tract at residues 245–264 (KRQTASPSTPTLGQPFWHNQ) is disordered.

The protein belongs to the ThiG family. Homotetramer. Forms heterodimers with either ThiH or ThiS.

Its subcellular location is the cytoplasm. It catalyses the reaction [ThiS sulfur-carrier protein]-C-terminal-Gly-aminoethanethioate + 2-iminoacetate + 1-deoxy-D-xylulose 5-phosphate = [ThiS sulfur-carrier protein]-C-terminal Gly-Gly + 2-[(2R,5Z)-2-carboxy-4-methylthiazol-5(2H)-ylidene]ethyl phosphate + 2 H2O + H(+). It functions in the pathway cofactor biosynthesis; thiamine diphosphate biosynthesis. Functionally, catalyzes the rearrangement of 1-deoxy-D-xylulose 5-phosphate (DXP) to produce the thiazole phosphate moiety of thiamine. Sulfur is provided by the thiocarboxylate moiety of the carrier protein ThiS. In vitro, sulfur can be provided by H(2)S. This is Thiazole synthase from Cellvibrio japonicus (strain Ueda107) (Pseudomonas fluorescens subsp. cellulosa).